A 125-amino-acid chain; its full sequence is Small ribosomal subunit protein uS12 (125 aa).

The tract at residues Met1 to Arg31 is disordered. Polar residues predominate over residues Ser19–Gln29. Asp89 bears the 3-methylthioaspartic acid mark.

It belongs to the universal ribosomal protein uS12 family. In terms of assembly, part of the 30S ribosomal subunit. Contacts proteins S8 and S17. May interact with IF1 in the 30S initiation complex.

Functionally, with S4 and S5 plays an important role in translational accuracy. Its function is as follows. Interacts with and stabilizes bases of the 16S rRNA that are involved in tRNA selection in the A site and with the mRNA backbone. Located at the interface of the 30S and 50S subunits, it traverses the body of the 30S subunit contacting proteins on the other side and probably holding the rRNA structure together. The combined cluster of proteins S8, S12 and S17 appears to hold together the shoulder and platform of the 30S subunit. This chain is Small ribosomal subunit protein uS12, found in Paracidovorax citrulli (strain AAC00-1) (Acidovorax citrulli).